Reading from the N-terminus, the 295-residue chain is Phosphoribosylaminoimidazole-succinocarboxamide synthase (295 aa).

This sequence belongs to the SAICAR synthetase family.

The catalysed reaction is 5-amino-1-(5-phospho-D-ribosyl)imidazole-4-carboxylate + L-aspartate + ATP = (2S)-2-[5-amino-1-(5-phospho-beta-D-ribosyl)imidazole-4-carboxamido]succinate + ADP + phosphate + 2 H(+). Its pathway is purine metabolism; IMP biosynthesis via de novo pathway; 5-amino-1-(5-phospho-D-ribosyl)imidazole-4-carboxamide from 5-amino-1-(5-phospho-D-ribosyl)imidazole-4-carboxylate: step 1/2. This is Phosphoribosylaminoimidazole-succinocarboxamide synthase from Nitrosomonas europaea (strain ATCC 19718 / CIP 103999 / KCTC 2705 / NBRC 14298).